The sequence spans 505 residues: Cytochrome P450 CYP71D313 (505 aa).

The chain crosses the membrane as a helical span at residues 1–21 (MELQFPLFSIFFVTILFFFLF). C441 provides a ligand contact to heme. Residues 442 to 462 (PGIAFGIATIELPLALLLYHF) traverse the membrane as a helical segment.

The protein belongs to the cytochrome P450 family. Heme is required as a cofactor.

The protein resides in the membrane. Its function is as follows. Probable heme-thiolate monooxygenase. In Panax ginseng (Korean ginseng), this protein is Cytochrome P450 CYP71D313.